The following is a 331-amino-acid chain: NADH-quinone oxidoreductase subunit H (331 aa).

A run of 8 helical transmembrane segments spans residues 7–27, 81–101, 114–134, 154–174, 187–207, 238–258, 271–291, and 310–330; these read ALVT…AVVI, MIFT…FAIV, IGIL…LFAG, ISYE…VGSF, VWFI…GVAV, FFVG…TLFF, WLSF…FILI, and VCLP…LAAA.

The protein belongs to the complex I subunit 1 family. NDH-1 is composed of 13 different subunits. Subunits NuoA, H, J, K, L, M, N constitute the membrane sector of the complex.

The protein localises to the cell inner membrane. It carries out the reaction a quinone + NADH + 5 H(+)(in) = a quinol + NAD(+) + 4 H(+)(out). Functionally, NDH-1 shuttles electrons from NADH, via FMN and iron-sulfur (Fe-S) centers, to quinones in the respiratory chain. The immediate electron acceptor for the enzyme in this species is believed to be ubiquinone. Couples the redox reaction to proton translocation (for every two electrons transferred, four hydrogen ions are translocated across the cytoplasmic membrane), and thus conserves the redox energy in a proton gradient. This subunit may bind ubiquinone. This chain is NADH-quinone oxidoreductase subunit H, found in Pseudomonas aeruginosa (strain ATCC 15692 / DSM 22644 / CIP 104116 / JCM 14847 / LMG 12228 / 1C / PRS 101 / PAO1).